Here is a 354-residue protein sequence, read N- to C-terminus: Lysophosphatidic acid receptor 3 (354 aa).

Residues 1-31 (MNECHYDKRMDFFYNRSNTDTADEWTGTKLV) are Extracellular-facing. N-linked (GlcNAc...) asparagine glycosylation occurs at N15. A helical membrane pass occupies residues 32–52 (IVLCVGTFFCLFIFFSNSLVI). Residues 53–67 (AAVITNRKFHFPFYY) are Cytoplasmic-facing. Residues 68–88 (LLANLAAADFFAGIAYVFLMF) form a helical membrane-spanning segment. Over 89-101 (NTGPVSKTLTVNR) the chain is Extracellular. Residues 102–124 (WLLRQGLLDTSLTASLANLLVIA) form a helical membrane-spanning segment. The Cytoplasmic portion of the chain corresponds to 125–146 (VERHMSIMRMRIHSNLTKKRVT). A helical transmembrane segment spans residues 147 to 167 (LLILLVWAIAIFMGAVPTLGW). The Extracellular portion of the chain corresponds to 168–186 (NCLCNISACSSLAPIYSRS). N-linked (GlcNAc...) asparagine glycosylation is present at N172. Residues 187–207 (YLIFWTVSNLLAFFIMVVVYV) form a helical membrane-spanning segment. Topologically, residues 208-240 (RIYMYVKRKTNVLSPHTSGSISRRRAPMKLMKT) are cytoplasmic. Residues 241–261 (VMTVLGAFVVCWTPGLVVLLL) form a helical membrane-spanning segment. The Extracellular segment spans residues 262 to 276 (DGLNCKQCNVQHVKR). The chain crosses the membrane as a helical span at residues 277–295 (WFLLLALLNSVMNPIIYSY). The Cytoplasmic portion of the chain corresponds to 296–354 (KDEDMYNTMRKMICCAPHDSNAERHPSRIPSTIHSRSDTGSQYLEDSISQGQVCNKSSS). A lipid anchor (S-palmitoyl cysteine) is attached at C309.

Belongs to the G-protein coupled receptor 1 family.

It is found in the cell membrane. Its function is as follows. Receptor for lysophosphatidic acid (LPA), a mediator of diverse cellular activities. Seems to be coupled to the G(i)/G(o) and G(q) families of heteromeric G proteins. The sequence is that of Lysophosphatidic acid receptor 3 (Lpar3) from Rattus norvegicus (Rat).